We begin with the raw amino-acid sequence, 413 residues long: Peptidase T (413 aa).

His-81 lines the Zn(2+) pocket. The active site involves Asp-83. Asp-143 is a binding site for Zn(2+). The Proton acceptor role is filled by Glu-178. 3 residues coordinate Zn(2+): Glu-179, Asp-201, and His-383.

The protein belongs to the peptidase M20B family. Zn(2+) serves as cofactor.

It is found in the cytoplasm. It carries out the reaction Release of the N-terminal residue from a tripeptide.. Functionally, cleaves the N-terminal amino acid of tripeptides. This Lactococcus lactis subsp. hordniae protein is Peptidase T.